A 732-amino-acid polypeptide reads, in one-letter code: E3 ubiquitin-protein ligase DCST1 (732 aa).

Over 1-46 the chain is Cytoplasmic; sequence MAFLSSTLHSLGIFEKISRIKEVLKNRLLDLTKRRDQAREQQRKRP. Residues 47-67 traverse the membrane as a helical segment; that stretch reads HTIIQGLLLWSLPVSWIRFLW. The Extracellular portion of the chain corresponds to 68–76; the sequence is RQPGEFPVT. Residues 77–97 form a helical membrane-spanning segment; the sequence is AFLLGAGTGGLLAIGLFQLLV. The Cytoplasmic segment spans residues 98–107; it reads NPMNIYEEQK. A helical transmembrane segment spans residues 108-128; it reads VVALYCLASLGAIGWGTSPHI. At 129–394 the chain is on the extracellular side; it reads RCASLLLVPK…VRDYVRQQET (266 aa). Asparagine 184, asparagine 217, asparagine 346, and asparagine 374 each carry an N-linked (GlcNAc...) asparagine glycan. A helical membrane pass occupies residues 395-415; it reads YLQWAMGLLHVLLSCTFLLVF. At 416–489 the chain is on the cytoplasmic side; it reads HSAFSYMDHY…RYVIRELLET (74 aa). A helical membrane pass occupies residues 490–510; it reads LPIVLLLLVLCAIDWALYSVF. Over 511-576 the chain is Extracellular; it reads DTIRQHSFVQ…PQPISLNARD (66 aa). Asparagine 551 carries N-linked (GlcNAc...) asparagine glycosylation. Residues 577-597 form a helical membrane-spanning segment; the sequence is YFKASLPTLLLVCLCLAQAFG. The Cytoplasmic portion of the chain corresponds to 598-732; it reads YRLRRVIAAF…DSNDDAVYGD (135 aa). The RING-type; degenerate zinc finger occupies 672–711; that stretch reads CVVCQAMETPDSYVCPTPDCKALYCRSCWDDMQRLCPVCT.

In terms of assembly, interacts with STAT2; the interaction results in STAT2 'Lys-48'-linked ubiquitination leading to its proteasomal degradation. Interacts with DCST2. As to expression, expressed in testis.

Its subcellular location is the cell membrane. The protein resides in the cytoplasmic vesicle. It localises to the secretory vesicle. The protein localises to the acrosome membrane. It catalyses the reaction S-ubiquitinyl-[E2 ubiquitin-conjugating enzyme]-L-cysteine + [acceptor protein]-L-lysine = [E2 ubiquitin-conjugating enzyme]-L-cysteine + N(6)-ubiquitinyl-[acceptor protein]-L-lysine.. It functions in the pathway protein modification; protein ubiquitination. Its function is as follows. E3 ubiquitin-protein ligase which mediates 'Lys-48'-linked ubiquitination of STAT2 and induces its proteasomal degradation thereby negatively regulating type-I-interferon signaling. Essential sperm cell-surface protein required for sperm-egg fusion and fertilization. This is E3 ubiquitin-protein ligase DCST1 (Dcst1) from Mus musculus (Mouse).